Reading from the N-terminus, the 420-residue chain is CinA-like protein (420 aa).

It belongs to the CinA family.

This is CinA-like protein from Syntrophus aciditrophicus (strain SB).